A 61-amino-acid polypeptide reads, in one-letter code: MAEVRVGENESLDNALRRFRRQCSKAGVLSEVRKREHYESPSVKRKKKSEAARKRKYKYNK.

The interval 34-61 is disordered; the sequence is KREHYESPSVKRKKKSEAARKRKYKYNK. Basic residues predominate over residues 43–61; sequence VKRKKKSEAARKRKYKYNK.

It belongs to the bacterial ribosomal protein bS21 family.

In Thermoanaerobacter pseudethanolicus (strain ATCC 33223 / 39E) (Clostridium thermohydrosulfuricum), this protein is Small ribosomal subunit protein bS21.